Consider the following 62-residue polypeptide: MQKLFIVLVLFCILRLDAEVDGLTVSLCNQSECQEKCKKENKNGKCIQEIELNWVYNICKCF.

An N-terminal signal peptide occupies residues 1–18; it reads MQKLFIVLVLFCILRLDA. 3 cysteine pairs are disulfide-bonded: cysteine 28-cysteine 46, cysteine 33-cysteine 59, and cysteine 37-cysteine 61.

Belongs to the short scorpion toxin superfamily. Potassium channel inhibitor family. Alpha-KTx 23 subfamily. In terms of tissue distribution, expressed by the venom gland.

The protein resides in the secreted. In terms of biological role, may block potassium channels. This Buthus israelis (Israeli scorpion) protein is Potassium channel toxin alpha-KTx Tx790.